Here is a 335-residue protein sequence, read N- to C-terminus: Tetraacyldisaccharide 4'-kinase (335 aa).

58–65 contributes to the ATP binding site; sequence TVGGSGKT.

Belongs to the LpxK family.

The catalysed reaction is a lipid A disaccharide + ATP = a lipid IVA + ADP + H(+). The protein operates within glycolipid biosynthesis; lipid IV(A) biosynthesis; lipid IV(A) from (3R)-3-hydroxytetradecanoyl-[acyl-carrier-protein] and UDP-N-acetyl-alpha-D-glucosamine: step 6/6. Functionally, transfers the gamma-phosphate of ATP to the 4'-position of a tetraacyldisaccharide 1-phosphate intermediate (termed DS-1-P) to form tetraacyldisaccharide 1,4'-bis-phosphate (lipid IVA). This chain is Tetraacyldisaccharide 4'-kinase, found in Shewanella sp. (strain MR-7).